Reading from the N-terminus, the 85-residue chain is MAHKKAAGSTKNGRDSNAKRLGVKRFGGEQVLAGSIIVRQRGTKFHAGDNVGRGKDDTLFAKATGEVAFVTKGKPLRTFVTIKAD.

Residues 1-21 (MAHKKAAGSTKNGRDSNAKRL) are disordered.

It belongs to the bacterial ribosomal protein bL27 family.

The sequence is that of Large ribosomal subunit protein bL27 from Hydrogenovibrio crunogenus (strain DSM 25203 / XCL-2) (Thiomicrospira crunogena).